We begin with the raw amino-acid sequence, 362 residues long: Chorismate synthase (362 aa).

Arginine 48 and arginine 54 together coordinate NADP(+). FMN is bound by residues 131 to 133, 243 to 244, glycine 287, 302 to 306, and arginine 328; these read RSS, NA, and KPTSS.

The protein belongs to the chorismate synthase family. Homotetramer. FMNH2 serves as cofactor.

The catalysed reaction is 5-O-(1-carboxyvinyl)-3-phosphoshikimate = chorismate + phosphate. It participates in metabolic intermediate biosynthesis; chorismate biosynthesis; chorismate from D-erythrose 4-phosphate and phosphoenolpyruvate: step 7/7. Functionally, catalyzes the anti-1,4-elimination of the C-3 phosphate and the C-6 proR hydrogen from 5-enolpyruvylshikimate-3-phosphate (EPSP) to yield chorismate, which is the branch point compound that serves as the starting substrate for the three terminal pathways of aromatic amino acid biosynthesis. This reaction introduces a second double bond into the aromatic ring system. This chain is Chorismate synthase, found in Rhodopseudomonas palustris (strain BisB18).